We begin with the raw amino-acid sequence, 524 residues long: Cytochrome P450 4F1 (524 aa).

A helical membrane pass occupies residues 15 to 35 (VAFPWQTLLLFGASWILAQIL). The heme site is built by Glu-328 and Cys-468.

It belongs to the cytochrome P450 family. Heme is required as a cofactor. Expressed in liver.

It localises to the endoplasmic reticulum membrane. Its subcellular location is the microsome membrane. It carries out the reaction (5Z,8Z,11Z,14Z)-eicosatetraenoate + reduced [NADPH--hemoprotein reductase] + O2 = 20-hydroxy-(5Z,8Z,11Z,14Z)-eicosatetraenoate + oxidized [NADPH--hemoprotein reductase] + H2O + H(+). The enzyme catalyses 5-hydroxy-(6E,8Z,11Z,14Z)-eicosatetraenoate + reduced [NADPH--hemoprotein reductase] + O2 = 5,20-dihydroxy-(6E,8Z,11Z,14Z)-eicosatetraenoate + oxidized [NADPH--hemoprotein reductase] + H2O + H(+). The catalysed reaction is 8-hydroxy-(5Z,9E,11Z,14Z)-eicosatetraenoate + reduced [NADPH--hemoprotein reductase] + O2 = 8,20-dihydroxy-(5Z,9E,11Z,14Z)-eicosatetraenoate + oxidized [NADPH--hemoprotein reductase] + H2O + H(+). It catalyses the reaction leukotriene B4 + reduced [NADPH--hemoprotein reductase] + O2 = 20-hydroxy-leukotriene B4 + oxidized [NADPH--hemoprotein reductase] + H2O + H(+). It carries out the reaction 6-trans-leukotriene B4 + reduced [NADPH--hemoprotein reductase] + O2 = 20-hydroxy-6-trans-leukotriene B4 + oxidized [NADPH--hemoprotein reductase] + H2O + H(+). The enzyme catalyses lipoxin A4 + reduced [NADPH--hemoprotein reductase] + O2 = 20-hydroxy-lipoxin A4 + oxidized [NADPH--hemoprotein reductase] + H2O + H(+). In terms of biological role, a cytochrome P450 monooxygenase involved in the metabolism of arachidonic acid and its oxygenated derivatives. Mechanistically, uses molecular oxygen inserting one oxygen atom into a substrate, and reducing the second into a water molecule, with two electrons provided by NADPH via cytochrome P450 reductase (CPR; NADPH-ferrihemoprotein reductase). Participates in the conversion of arachidonic acid to omega-hydroxyeicosatetraenoic acid (20-HETE), a signaling molecule acting both as vasoconstrictive and natriuretic with overall effect on arterial blood pressure. May play a role in the oxidative inactivation of eicosanoids, including both pro-inflammatory and anti-inflammatory mediators such as leukotriene B4 (LTB4), lipoxin A4 (LXA4), and several HETEs. The protein is Cytochrome P450 4F1 of Rattus norvegicus (Rat).